The sequence spans 288 residues: NAD kinase (288 aa).

Residue aspartate 68 is the Proton acceptor of the active site. Residues 68–69 (DG), 142–143 (ND), arginine 153, aspartate 172, and glutamine 242 contribute to the NAD(+) site.

The protein belongs to the NAD kinase family. It depends on a divalent metal cation as a cofactor.

Its subcellular location is the cytoplasm. The enzyme catalyses NAD(+) + ATP = ADP + NADP(+) + H(+). In terms of biological role, involved in the regulation of the intracellular balance of NAD and NADP, and is a key enzyme in the biosynthesis of NADP. Catalyzes specifically the phosphorylation on 2'-hydroxyl of the adenosine moiety of NAD to yield NADP. This is NAD kinase from Desulforamulus reducens (strain ATCC BAA-1160 / DSM 100696 / MI-1) (Desulfotomaculum reducens).